The following is a 378-amino-acid chain: MRPATLEFIKQQFTGYYQRVYPVTPDALLQREWGFIFFDAGREVRMRRHLAFGERQELTEYLKTMVPAHVFYSSAYYESPGAPTMAEKGWSGADLIFDLDADHIMHGSYQAMLARVKEEVQKLLAVLTDELGFSEKYCEVVFSGGRGYHIHVNDLAVRSWGSAERREVVNYVCGIGLDPGLLIRAGTDLSTGWPRRYLGALDGYLAWLKVKNQKDALLHLSSIKGVSRSSAAGLLKSLDQVRATIGGDHPEKVLGDRVLRAVTTNDNPDWKKRLQETGVQADEPVTTDIKRLIRMPTSLHGGSGLRVVPLTISEVQEFDPLIDAVVFGDRDVQVTAEKTLTVSLLGNTYEVSAGTQTVPEAVAVFLCCRGLAEIAEGR.

Active-site residues include Asp-98, Asp-100, and Asp-282.

The protein belongs to the eukaryotic-type primase small subunit family. In terms of assembly, heterodimer of a small subunit (PriS) and a large subunit (PriL). The cofactor is Mg(2+). Mn(2+) is required as a cofactor.

Catalytic subunit of DNA primase, an RNA polymerase that catalyzes the synthesis of short RNA molecules used as primers for DNA polymerase during DNA replication. The small subunit contains the primase catalytic core and has DNA synthesis activity on its own. Binding to the large subunit stabilizes and modulates the activity, increasing the rate of DNA synthesis while decreasing the length of the DNA fragments, and conferring RNA synthesis capability. The DNA polymerase activity may enable DNA primase to also catalyze primer extension after primer synthesis. May also play a role in DNA repair. The polypeptide is DNA primase small subunit PriS (Methanosphaerula palustris (strain ATCC BAA-1556 / DSM 19958 / E1-9c)).